The following is a 389-amino-acid chain: MNLHEYQAKQLFEHYGLPVKNGAVCQSVEDVDLVLAQLSGGKWAAKCQVHAGGRGKAGGVKLVQDVEEARAFAEKWLGQRLVTFQTDKLGQPVNQIYFEETCDIDKEFYLSAVVDRTSQKVVFIASSEGGMNIEEVVQNSPHLLHKVTIDPLFGGLPYQGRELAFKLGLSGTQNKQFTDIFMGLSRLFLEKDLSLLEVNPLVLTPQGNLVCLDAKISVDDNALFRHKDLLALQDLTQNDAREAEAEKFQLNYVALEGDIGCMVNGAGLAMGTMDIVKLYGGKPANFLDVGGGATQERVAEAFKIILTDPSVKVILVNIFGGIVRCDLIAEGVIAAVNEVGVRVPVVVRLEGTNAEMGRQILAESDVNILTAQSLQQAAELAVNAAKGEH.

The ATP-grasp domain maps to Lys9–Glu244. ATP contacts are provided by residues Lys46, Gly53–Gly55, Glu99, Cys102, and Glu107. Mg(2+)-binding residues include Asn199 and Asp213. Residues Asn264 and Gly321–Val323 contribute to the substrate site.

The protein belongs to the succinate/malate CoA ligase beta subunit family. Heterotetramer of two alpha and two beta subunits. It depends on Mg(2+) as a cofactor.

It catalyses the reaction succinate + ATP + CoA = succinyl-CoA + ADP + phosphate. The catalysed reaction is GTP + succinate + CoA = succinyl-CoA + GDP + phosphate. Its pathway is carbohydrate metabolism; tricarboxylic acid cycle; succinate from succinyl-CoA (ligase route): step 1/1. Succinyl-CoA synthetase functions in the citric acid cycle (TCA), coupling the hydrolysis of succinyl-CoA to the synthesis of either ATP or GTP and thus represents the only step of substrate-level phosphorylation in the TCA. The beta subunit provides nucleotide specificity of the enzyme and binds the substrate succinate, while the binding sites for coenzyme A and phosphate are found in the alpha subunit. In Haemophilus influenzae (strain ATCC 51907 / DSM 11121 / KW20 / Rd), this protein is Succinate--CoA ligase [ADP-forming] subunit beta.